The following is a 415-amino-acid chain: Serine hydroxymethyltransferase (415 aa).

Residues L117 and 121 to 123 (GHL) contribute to the (6S)-5,6,7,8-tetrahydrofolate site. An N6-(pyridoxal phosphate)lysine modification is found at K226.

It belongs to the SHMT family. Homodimer. Requires pyridoxal 5'-phosphate as cofactor.

It is found in the cytoplasm. It catalyses the reaction (6R)-5,10-methylene-5,6,7,8-tetrahydrofolate + glycine + H2O = (6S)-5,6,7,8-tetrahydrofolate + L-serine. It participates in one-carbon metabolism; tetrahydrofolate interconversion. It functions in the pathway amino-acid biosynthesis; glycine biosynthesis; glycine from L-serine: step 1/1. Its function is as follows. Catalyzes the reversible interconversion of serine and glycine with tetrahydrofolate (THF) serving as the one-carbon carrier. This reaction serves as the major source of one-carbon groups required for the biosynthesis of purines, thymidylate, methionine, and other important biomolecules. Also exhibits THF-independent aldolase activity toward beta-hydroxyamino acids, producing glycine and aldehydes, via a retro-aldol mechanism. The chain is Serine hydroxymethyltransferase from Dehalococcoides mccartyi (strain ATCC BAA-2266 / KCTC 15142 / 195) (Dehalococcoides ethenogenes (strain 195)).